We begin with the raw amino-acid sequence, 142 residues long: Universal stress protein G (142 aa).

It belongs to the universal stress protein A family.

This chain is Universal stress protein G (uspG), found in Shigella flexneri.